The sequence spans 128 residues: Small ribosomal subunit protein uS11 (128 aa).

The protein belongs to the universal ribosomal protein uS11 family. In terms of assembly, part of the 30S ribosomal subunit. Interacts with proteins S7 and S18. Binds to IF-3.

In terms of biological role, located on the platform of the 30S subunit, it bridges several disparate RNA helices of the 16S rRNA. Forms part of the Shine-Dalgarno cleft in the 70S ribosome. This Desulfosudis oleivorans (strain DSM 6200 / JCM 39069 / Hxd3) (Desulfococcus oleovorans) protein is Small ribosomal subunit protein uS11.